We begin with the raw amino-acid sequence, 294 residues long: Sulfotransferase 1E1 (294 aa).

Residue 47–52 (KSGTTW) coordinates 3'-phosphoadenylyl sulfate. Residue 105-107 (KTH) coordinates substrate. The active-site Proton acceptor is the H107. Residues R129, S137, Y192, 226–231 (TSFQEM), and 256–258 (RKG) each bind 3'-phosphoadenylyl sulfate.

This sequence belongs to the sulfotransferase 1 family. Homodimer. Liver, intestine and at lower level in the kidney.

The protein localises to the cytoplasm. It localises to the cytosol. It catalyses the reaction estrone + 3'-phosphoadenylyl sulfate = estrone 3-sulfate + adenosine 3',5'-bisphosphate + H(+). The catalysed reaction is (24S)-hydroxycholesterol + 3'-phosphoadenylyl sulfate = (24S)-hydroxycholesterol 3-sulfate + adenosine 3',5'-bisphosphate + H(+). It carries out the reaction 17beta-estradiol + 3'-phosphoadenylyl sulfate = 17beta-estradiol 3-sulfate + adenosine 3',5'-bisphosphate + H(+). The enzyme catalyses 3beta-hydroxyandrost-5-en-17-one + 3'-phosphoadenylyl sulfate = dehydroepiandrosterone 3-sulfate + adenosine 3',5'-bisphosphate + H(+). It catalyses the reaction 4-ethylphenol + 3'-phosphoadenylyl sulfate = 4-ethylphenyl sulfate + adenosine 3',5'-bisphosphate + H(+). Its activity is regulated as follows. Inhibited by estradiol. In terms of biological role, sulfotransferase that utilizes 3'-phospho-5'-adenylyl sulfate (PAPS) as sulfonate donor to catalyze the sulfate conjugation of estradiol and estrone. Is a key enzyme in estrogen homeostasis, the sulfation of estrogens leads to their inactivation. Also sulfates dehydroepiandrosterone (DHEA), pregnenolone, (24S)-hydroxycholesterol and xenobiotic compounds like ethinylestradiol, equalenin, diethyl stilbesterol and 1-naphthol at significantly lower efficiency. Does not sulfonate cortisol, testosterone and dopamine. May play a role in gut microbiota-host metabolic interaction. O-sulfonates 4-ethylphenol (4-EP), a dietary tyrosine-derived metabolite produced by gut bacteria. The product 4-EPS crosses the blood-brain barrier and may negatively regulate oligodendrocyte maturation and myelination, affecting the functional connectivity of different brain regions associated with the limbic system. This chain is Sulfotransferase 1E1 (SULT1E1), found in Homo sapiens (Human).